The primary structure comprises 342 residues: Farnesyl pyrophosphate synthase (342 aa).

Isopentenyl diphosphate is bound by residues Lys-47, Arg-50, and Gln-86. Residues Asp-93 and Asp-97 each coordinate Mg(2+). Position 102 (Arg-102) interacts with dimethylallyl diphosphate. Arg-103 is an isopentenyl diphosphate binding site. Residues Lys-190, Thr-191, Gln-229, Lys-246, and Lys-255 each contribute to the dimethylallyl diphosphate site.

The protein belongs to the FPP/GGPP synthase family. As to quaternary structure, homodimer. Mg(2+) serves as cofactor. Mostly expressed in roots and seeds, and to a lower extent, in leaves and stems.

The protein resides in the cytoplasm. The catalysed reaction is isopentenyl diphosphate + dimethylallyl diphosphate = (2E)-geranyl diphosphate + diphosphate. The enzyme catalyses isopentenyl diphosphate + (2E)-geranyl diphosphate = (2E,6E)-farnesyl diphosphate + diphosphate. Its pathway is isoprenoid biosynthesis; farnesyl diphosphate biosynthesis; farnesyl diphosphate from geranyl diphosphate and isopentenyl diphosphate: step 1/1. It participates in isoprenoid biosynthesis; geranyl diphosphate biosynthesis; geranyl diphosphate from dimethylallyl diphosphate and isopentenyl diphosphate: step 1/1. Stimulated by methyl jasmonate (MeJA). Catalyzes the sequential condensation of isopentenyl pyrophosphate with the allylic pyrophosphates, dimethylallyl pyrophosphate, and then with the resultant geranylpyrophosphate to the ultimate product farnesyl pyrophosphate. Component of the triterpene saponins (e.g. ginsenosides or panaxosides) and phytosterols biosynthetic pathways. Promotes the accumulation of ginsenosides. This Panax ginseng (Korean ginseng) protein is Farnesyl pyrophosphate synthase.